A 607-amino-acid chain; its full sequence is Putative pentatricopeptide repeat-containing protein At1g09680 (607 aa).

PPR repeat units follow at residues 239-273, 274-308, 309-343, 344-378, 379-413, 414-448, 449-483, 484-518, and 519-553; these read NVYV…SLQP, TVVS…RTRP, DVFT…GLIP, NDVI…GLQP, DIVL…GLRP, DKIT…GIEL, DRVG…GIKP, DDVT…GHVP, and SVVT…GVVP.

The protein belongs to the PPR family. P subfamily.

This is Putative pentatricopeptide repeat-containing protein At1g09680 from Arabidopsis thaliana (Mouse-ear cress).